Reading from the N-terminus, the 443-residue chain is Tol-Pal system protein TolB (443 aa).

The first 33 residues, 1 to 33, serve as a signal peptide directing secretion; it reads MKIGIINTKIRTVFSAFACMIAASLVCTMPARA.

The protein belongs to the TolB family. As to quaternary structure, the Tol-Pal system is composed of five core proteins: the inner membrane proteins TolA, TolQ and TolR, the periplasmic protein TolB and the outer membrane protein Pal. They form a network linking the inner and outer membranes and the peptidoglycan layer.

The protein resides in the periplasm. Part of the Tol-Pal system, which plays a role in outer membrane invagination during cell division and is important for maintaining outer membrane integrity. This Brucella canis (strain ATCC 23365 / NCTC 10854 / RM-666) protein is Tol-Pal system protein TolB.